A 25-amino-acid chain; its full sequence is Cysteine-rich venom protein 25 (25 aa).

Residues 1-25 form a disordered region; that stretch reads NVDFNSESTRRKKKQKEIVDLXNSL.

Belongs to the CRISP family. Contains 8 disulfide bonds. In terms of tissue distribution, expressed by the venom gland.

It is found in the secreted. This Naja haje haje (Egyptian cobra) protein is Cysteine-rich venom protein 25.